The sequence spans 285 residues: RNA polymerase sigma factor RpoH (285 aa).

The segment at 53 to 122 (LILSHLRFVV…IHEYVLRNWR (70 aa)) is sigma-70 factor domain-2. The short motif at 77-80 (DLIQ) is the Interaction with polymerase core subunit RpoC element. Positions 229-281 (AMEGLDERSQDIIRARWLDEDNKSTLQELADRYGVSAERVRQLEKNAMKKLRA) are sigma-70 factor domain-4. Residues 254–273 (LQELADRYGVSAERVRQLEK) constitute a DNA-binding region (H-T-H motif).

This sequence belongs to the sigma-70 factor family. RpoH subfamily. In terms of assembly, interacts with the RNA polymerase core enzyme.

It localises to the cytoplasm. Its function is as follows. Sigma factors are initiation factors that promote the attachment of RNA polymerase to specific initiation sites and are then released. This sigma factor is involved in regulation of expression of heat shock genes. This Enterobacter cloacae protein is RNA polymerase sigma factor RpoH.